A 216-amino-acid polypeptide reads, in one-letter code: Large ribosomal subunit protein uL4 (216 aa).

Positions 47-77 are disordered; it reads THKVKGMGEVSGTTKKPYRQKGTGNARQGSL.

It belongs to the universal ribosomal protein uL4 family. In terms of assembly, part of the 50S ribosomal subunit.

In terms of biological role, one of the primary rRNA binding proteins, this protein initially binds near the 5'-end of the 23S rRNA. It is important during the early stages of 50S assembly. It makes multiple contacts with different domains of the 23S rRNA in the assembled 50S subunit and ribosome. Functionally, forms part of the polypeptide exit tunnel. This Acidiphilium cryptum (strain JF-5) protein is Large ribosomal subunit protein uL4.